A 140-amino-acid polypeptide reads, in one-letter code: Small ribosomal subunit protein uS9 (140 aa).

It belongs to the universal ribosomal protein uS9 family.

The polypeptide is Small ribosomal subunit protein uS9 (Desulfurococcus amylolyticus (strain DSM 18924 / JCM 16383 / VKM B-2413 / 1221n) (Desulfurococcus kamchatkensis)).